A 440-amino-acid chain; its full sequence is Ribulose bisphosphate carboxylase large chain (440 aa).

The residue at position 4 (Lys4) is an N6,N6,N6-trimethyllysine. Asn113 and Thr163 together coordinate substrate. Lys165 (proton acceptor) is an active-site residue. Lys167 is a binding site for substrate. Residues Lys191, Asp193, and Glu194 each contribute to the Mg(2+) site. Lys191 is modified (N6-carboxylysine). Residue His284 is the Proton acceptor of the active site. Residues Arg285, His317, and Ser369 each contribute to the substrate site.

The protein belongs to the RuBisCO large chain family. Type I subfamily. In terms of assembly, heterohexadecamer of 8 large chains and 8 small chains; disulfide-linked. The disulfide link is formed within the large subunit homodimers. Mg(2+) serves as cofactor. The disulfide bond which can form in the large chain dimeric partners within the hexadecamer appears to be associated with oxidative stress and protein turnover.

It is found in the plastid. The protein resides in the chloroplast. It catalyses the reaction 2 (2R)-3-phosphoglycerate + 2 H(+) = D-ribulose 1,5-bisphosphate + CO2 + H2O. It carries out the reaction D-ribulose 1,5-bisphosphate + O2 = 2-phosphoglycolate + (2R)-3-phosphoglycerate + 2 H(+). Functionally, ruBisCO catalyzes two reactions: the carboxylation of D-ribulose 1,5-bisphosphate, the primary event in carbon dioxide fixation, as well as the oxidative fragmentation of the pentose substrate in the photorespiration process. Both reactions occur simultaneously and in competition at the same active site. This chain is Ribulose bisphosphate carboxylase large chain, found in Ptychomitrium gardneri (Gardner's ptychomitrium moss).